The chain runs to 340 residues: ATPase get3 (340 aa).

34 to 41 (KGGVGKTT) is an ATP binding site. D63 is a catalytic residue. ATP is bound by residues E245 and N272. Positions 283 and 286 each coordinate Zn(2+).

This sequence belongs to the arsA ATPase family. As to quaternary structure, homodimer.

Its subcellular location is the cytoplasm. It localises to the endoplasmic reticulum. In terms of biological role, ATPase required for the post-translational delivery of tail-anchored (TA) proteins to the endoplasmic reticulum. Recognizes and selectively binds the transmembrane domain of TA proteins in the cytosol. This complex then targets to the endoplasmic reticulum by membrane-bound receptors, where the tail-anchored protein is released for insertion. This process is regulated by ATP binding and hydrolysis. ATP binding drives the homodimer towards the closed dimer state, facilitating recognition of newly synthesized TA membrane proteins. ATP hydrolysis is required for insertion. Subsequently, the homodimer reverts towards the open dimer state, lowering its affinity for the membrane-bound receptor, and returning it to the cytosol to initiate a new round of targeting. The protein is ATPase get3 (get3) of Emericella nidulans (strain FGSC A4 / ATCC 38163 / CBS 112.46 / NRRL 194 / M139) (Aspergillus nidulans).